The following is a 230-amino-acid chain: Cytidylate kinase (230 aa).

11–19 provides a ligand contact to ATP; that stretch reads GQSAAGKST.

The protein belongs to the cytidylate kinase family. Type 1 subfamily.

Its subcellular location is the cytoplasm. The enzyme catalyses CMP + ATP = CDP + ADP. It carries out the reaction dCMP + ATP = dCDP + ADP. This is Cytidylate kinase from Chloroflexus aggregans (strain MD-66 / DSM 9485).